The chain runs to 323 residues: Viral cathepsin (323 aa).

The signal sequence occupies residues 1–16 (MNKILFYLFVYAVVKS). The propeptide at 17 to 112 (AAYDPLKAPN…ILLDQPPGKG (96 aa)) is activation peptide. Cystine bridges form between C133–C174, C167–C207, and C262–C310. C136 is an active-site residue. Residue N158 is glycosylated (N-linked (GlcNAc...) asparagine; by host). Residues H269 and N289 contribute to the active site.

It belongs to the peptidase C1 family. Synthesized as an inactive proenzyme and activated by proteolytic removal of the inhibitory propeptide.

It carries out the reaction Endopeptidase of broad specificity, hydrolyzing substrates of both cathepsin L and cathepsin B.. Its function is as follows. Cysteine protease that plays an essential role in host liquefaction to facilitate horizontal transmission of the virus. May participate in the degradation of foreign protein expressed by the baculovirus system. The chain is Viral cathepsin (VCATH) from Bombyx mori (Silk moth).